A 185-amino-acid polypeptide reads, in one-letter code: Ribosome-recycling factor (185 aa).

Belongs to the RRF family.

Its subcellular location is the cytoplasm. In terms of biological role, responsible for the release of ribosomes from messenger RNA at the termination of protein biosynthesis. May increase the efficiency of translation by recycling ribosomes from one round of translation to another. The polypeptide is Ribosome-recycling factor (Ehrlichia ruminantium (strain Gardel)).